The following is a 394-amino-acid chain: Elongation factor Tu (394 aa).

The region spanning 10–205 is the tr-type G domain; that stretch reads KPHVNIGTIG…VDNWIPLPPR (196 aa). A G1 region spans residues 19–26; sequence GHVDHGKT. Residue 19-26 coordinates GTP; that stretch reads GHVDHGKT. Threonine 26 contacts Mg(2+). The interval 60 to 64 is G2; the sequence is GITIN. The segment at 81–84 is G3; that stretch reads DCPG. Residues 81–85 and 136–139 contribute to the GTP site; these read DCPGH and NKCD. Residues 136–139 are G4; the sequence is NKCD. Residues 174 to 176 form a G5 region; the sequence is SAL.

Belongs to the TRAFAC class translation factor GTPase superfamily. Classic translation factor GTPase family. EF-Tu/EF-1A subfamily. Monomer.

The protein resides in the cytoplasm. It catalyses the reaction GTP + H2O = GDP + phosphate + H(+). Functionally, GTP hydrolase that promotes the GTP-dependent binding of aminoacyl-tRNA to the A-site of ribosomes during protein biosynthesis. This chain is Elongation factor Tu, found in Bacteroides thetaiotaomicron (strain ATCC 29148 / DSM 2079 / JCM 5827 / CCUG 10774 / NCTC 10582 / VPI-5482 / E50).